The primary structure comprises 411 residues: Probable 26S proteasome regulatory subunit rpn-6.2 (411 aa).

Positions 212–381 (YKTSFSYFYE…DTVVIYPKAG (170 aa)) constitute a PCI domain.

Belongs to the proteasome subunit S9 family. Component of the lid subcomplex of the 19S proteasome regulatory particle complex (also named PA700 complex). The 26S proteasome consists of a 20S proteasome core and two 19S regulatory subunits.

Component of the lid subcomplex of the 26S proteasome, a multiprotein complex involved in the ATP-dependent degradation of ubiquitinated proteins. In the complex, rpn-6.2 is required for proteasome assembly. In Caenorhabditis briggsae, this protein is Probable 26S proteasome regulatory subunit rpn-6.2.